A 479-amino-acid polypeptide reads, in one-letter code: Caspase-8 (479 aa).

Positions 1 to 216 (MDFSRNLYDI…TISDSPREQD (216 aa)) are excised as a propeptide. DED domains follow at residues 2–80 (DFSR…TYLN) and 100–177 (AYRV…IIND). Residues serine 188 and serine 211 each carry the phosphoserine modification. An N6-acetyllysine modification is found at lysine 224. The active site involves histidine 317. The residue at position 334 (tyrosine 334) is a Phosphotyrosine. Cysteine 360 is an active-site residue. Positions 375–384 (SEEQPYLEMD) are excised as a propeptide. At tyrosine 380 the chain carries Phosphotyrosine; by SRC. Serine 387 carries the post-translational modification Phosphoserine; by CDK1. Position 413 is a (Microbial infection) ADP-riboxanated arginine (arginine 413).

This sequence belongs to the peptidase C14A family. As to quaternary structure, heterotetramer that consists of two anti-parallel arranged heterodimers, each one formed by a 18 kDa (p18) and a 10 kDa (p10) subunit. Component of the death-induced signaling complex (DISC) composed of cell surface receptor FAS/CD95 or TNFRSF1A, adapter protein FADD and the CASP8 protease; recruitment of CASP8 to the complex is required for processing of CASP8 into the p18 and p10 subunits. Component of the AIM2 PANoptosome complex, a multiprotein complex that drives inflammatory cell death (PANoptosis). Interacts with CFLAR and PEA15. Interacts with TNFAIP8L2. Interacts with CASP8AP2. Interacts with RFFL and RNF34; negatively regulate CASP8 through proteasomal degradation. Interacts with NOL3; decreases CASP8 activity in a mitochondria localization- and phosphorylation-dependent manner and this interaction is dissociated by calcium. Interacts with UBR2ca. Interacts with RIPK1. Interacts with stimulated TNFRSF10B; this interaction is followed by CASP8 proteolytic cleavage and activation. Interacts (phosphorylated on Tyr-380) with PIK3R1. Interacts at the endoplasmic reticulum with a complex containing BCAP31, BAP29, BCL2 and/or BCL2L1. In terms of assembly, (Microbial infection) Interacts with human cytomegalovirus/HHV-5 protein vICA/UL36; this interaction inhibits CASP8 activation. As to quaternary structure, (Microbial infection) Interacts with NleF from pathogenic E.coli. (Microbial infection) Interacts with molluscum contagiosum virus protein MC160. In terms of assembly, (Microbial infection) Interacts (via RIP homotypic interaction motif) with herpes simplex virus 1/HHV-1 protein RIR1/ICP6 (via RIP homotypic interaction motif); this interaction prevents necroptosis activation. As to quaternary structure, (Microbial infection) Interacts (via RIP homotypic interaction motif) with herpes simplex virus 2/HHV-2 protein RIR1/ICP10 (via RIP homotypic interaction motif); this interaction prevents necroptosis activation. Post-translationally, generation of the p10 and p18 subunits requires association with the death-inducing signaling complex (DISC), whereas additional processing is likely due to the autocatalytic activity of the activated protease. GZMB and CASP10 can be involved in these processing events. Phosphorylation on Ser-387 during mitosis by CDK1 inhibits activation by proteolysis and prevents apoptosis. Phosphorylation on Tyr-380 by SRC is mediated by interaction with the SRC SH2 domain and does not affect dimerization or recruitment to the death-inducing signaling complex (DISC) but negatively regulates DISC-mediated processing and activation of CASP8, down-regulating its proapoptotic function. Phosphorylation on Tyr-380 also enhances localization to lamellipodia in migrating cells. In terms of processing, (Microbial infection) ADP-riboxanation by C.violaceum CopC blocks CASP8 processing, preventing CASP8 activation and ability to mediate extrinsic apoptosis. Post-translationally, (Microbial infection) Proteolytically cleaved by the cowpox virus CRMA death inhibitory protein. In terms of tissue distribution, isoform 1, isoform 5 and isoform 7 are expressed in a wide variety of tissues. Highest expression in peripheral blood leukocytes, spleen, thymus and liver. Barely detectable in brain, testis and skeletal muscle.

It localises to the cytoplasm. The protein resides in the nucleus. The protein localises to the cell projection. Its subcellular location is the lamellipodium. The catalysed reaction is Strict requirement for Asp at position P1 and has a preferred cleavage sequence of (Leu/Asp/Val)-Glu-Thr-Asp-|-(Gly/Ser/Ala).. CASP8 activity is restricted by RIPK1. Inhibited by the effector protein NleF that is produced by pathogenic E.coli; this inhibits apoptosis. In terms of biological role, thiol protease that plays a key role in programmed cell death by acting as a molecular switch for apoptosis, necroptosis and pyroptosis, and is required to prevent tissue damage during embryonic development and adulthood. Initiator protease that induces extrinsic apoptosis by mediating cleavage and activation of effector caspases responsible for FAS/CD95-mediated and TNFRSF1A-induced cell death. Cleaves and activates effector caspases CASP3, CASP4, CASP6, CASP7, CASP9 and CASP10. Binding to the adapter molecule FADD recruits it to either receptor FAS/TNFRSF6 or TNFRSF1A. The resulting aggregate called the death-inducing signaling complex (DISC) performs CASP8 proteolytic activation. The active dimeric enzyme is then liberated from the DISC and free to activate downstream apoptotic proteases. Proteolytic fragments of the N-terminal propeptide (termed CAP3, CAP5 and CAP6) are likely retained in the DISC. In addition to extrinsic apoptosis, also acts as a negative regulator of necroptosis: acts by cleaving RIPK1 at 'Asp-324', which is crucial to inhibit RIPK1 kinase activity, limiting TNF-induced apoptosis, necroptosis and inflammatory response. Also able to initiate pyroptosis by mediating cleavage and activation of gasdermin-C and -D (GSDMC and GSDMD, respectively): gasdermin cleavage promotes release of the N-terminal moiety that binds to membranes and forms pores, triggering pyroptosis. Initiates pyroptosis following inactivation of MAP3K7/TAK1. Also acts as a regulator of innate immunity by mediating cleavage and inactivation of N4BP1 downstream of TLR3 or TLR4, thereby promoting cytokine production. May participate in the Granzyme B (GZMB) cell death pathways. Cleaves PARP1 and PARP2. Independent of its protease activity, promotes cell migration following phosphorylation at Tyr-380. Functionally, lacks the catalytic site and may interfere with the pro-apoptotic activity of the complex. Its function is as follows. Lacks the catalytic site and may interfere with the pro-apoptotic activity of the complex. Acts as an inhibitor of the caspase cascade. The protein is Caspase-8 of Homo sapiens (Human).